The sequence spans 356 residues: Phosphate acyltransferase (356 aa).

Belongs to the PlsX family. In terms of assembly, homodimer. Probably interacts with PlsY.

The protein resides in the cytoplasm. It carries out the reaction a fatty acyl-[ACP] + phosphate = an acyl phosphate + holo-[ACP]. It participates in lipid metabolism; phospholipid metabolism. Its function is as follows. Catalyzes the reversible formation of acyl-phosphate (acyl-PO(4)) from acyl-[acyl-carrier-protein] (acyl-ACP). This enzyme utilizes acyl-ACP as fatty acyl donor, but not acyl-CoA. This chain is Phosphate acyltransferase, found in Shigella boydii serotype 4 (strain Sb227).